We begin with the raw amino-acid sequence, 92 residues long: Defensin (92 aa).

A signal peptide spans 1–20; sequence MKFFVLVAIAFALLACVAQA. The propeptide occupies 21–52; sequence QPVSDVDPIPEDHVLVHEDAHQEVLQHSRQKR. Cystine bridges form between Cys55-Cys82, Cys68-Cys88, and Cys72-Cys90.

Belongs to the invertebrate defensin family. Type 1 subfamily. As to expression, hemolymph (at protein level).

It localises to the secreted. Functionally, responsible for the anti Gram-positive activity of immune hemolymph. Expressed in the absence of immune challenge during metamorphosis. The protein is Defensin (Def) of Drosophila melanogaster (Fruit fly).